Here is a 455-residue protein sequence, read N- to C-terminus: Phosphoglucosamine mutase (455 aa).

Ser108 (phosphoserine intermediate) is an active-site residue. 4 residues coordinate Mg(2+): Ser108, Asp246, Asp248, and Asp250. Ser108 is modified (phosphoserine).

Belongs to the phosphohexose mutase family. The cofactor is Mg(2+). In terms of processing, activated by phosphorylation.

It catalyses the reaction alpha-D-glucosamine 1-phosphate = D-glucosamine 6-phosphate. Its function is as follows. Catalyzes the conversion of glucosamine-6-phosphate to glucosamine-1-phosphate. In Frankia casuarinae (strain DSM 45818 / CECT 9043 / HFP020203 / CcI3), this protein is Phosphoglucosamine mutase.